The following is a 92-amino-acid chain: Small ribosomal subunit protein bS20 (92 aa).

The protein belongs to the bacterial ribosomal protein bS20 family.

Binds directly to 16S ribosomal RNA. The protein is Small ribosomal subunit protein bS20 of Thermosipho africanus (strain TCF52B).